The following is a 347-amino-acid chain: UPF0284 protein YN1551_0030 (347 aa).

This sequence belongs to the UPF0284 family.

This is UPF0284 protein YN1551_0030 from Saccharolobus islandicus (strain Y.N.15.51 / Yellowstone #2) (Sulfolobus islandicus).